We begin with the raw amino-acid sequence, 95 residues long: UPF0132 membrane protein AF_0736 (95 aa).

Transmembrane regions (helical) follow at residues 2–22 (CYTLGFVTGVLFLLFDRSPFV), 32–52 (TFSTITALVILLPVLPGGALL), and 55–75 (VVMAFSIILWAFCIVKASRGE).

Belongs to the UPF0132 family.

Its subcellular location is the cell membrane. This chain is UPF0132 membrane protein AF_0736, found in Archaeoglobus fulgidus (strain ATCC 49558 / DSM 4304 / JCM 9628 / NBRC 100126 / VC-16).